The chain runs to 474 residues: 3-isopropylmalate dehydratase large subunit (474 aa).

[4Fe-4S] cluster-binding residues include Cys-352, Cys-413, and Cys-416.

The protein belongs to the aconitase/IPM isomerase family. LeuC type 1 subfamily. As to quaternary structure, heterodimer of LeuC and LeuD. [4Fe-4S] cluster is required as a cofactor.

The catalysed reaction is (2R,3S)-3-isopropylmalate = (2S)-2-isopropylmalate. The protein operates within amino-acid biosynthesis; L-leucine biosynthesis; L-leucine from 3-methyl-2-oxobutanoate: step 2/4. Catalyzes the isomerization between 2-isopropylmalate and 3-isopropylmalate, via the formation of 2-isopropylmaleate. The sequence is that of 3-isopropylmalate dehydratase large subunit from Pseudomonas syringae pv. syringae (strain B728a).